The sequence spans 569 residues: Proline--tRNA ligase (569 aa).

The protein belongs to the class-II aminoacyl-tRNA synthetase family. ProS type 1 subfamily. Homodimer.

It localises to the cytoplasm. The catalysed reaction is tRNA(Pro) + L-proline + ATP = L-prolyl-tRNA(Pro) + AMP + diphosphate. Its function is as follows. Catalyzes the attachment of proline to tRNA(Pro) in a two-step reaction: proline is first activated by ATP to form Pro-AMP and then transferred to the acceptor end of tRNA(Pro). As ProRS can inadvertently accommodate and process non-cognate amino acids such as alanine and cysteine, to avoid such errors it has two additional distinct editing activities against alanine. One activity is designated as 'pretransfer' editing and involves the tRNA(Pro)-independent hydrolysis of activated Ala-AMP. The other activity is designated 'posttransfer' editing and involves deacylation of mischarged Ala-tRNA(Pro). The misacylated Cys-tRNA(Pro) is not edited by ProRS. This Shewanella woodyi (strain ATCC 51908 / MS32) protein is Proline--tRNA ligase.